The primary structure comprises 229 residues: UPF0128 protein aq_756 (229 aa).

The protein belongs to the UPF0128 family.

In Aquifex aeolicus (strain VF5), this protein is UPF0128 protein aq_756.